The primary structure comprises 112 residues: Peptidyl-tRNA hydrolase (112 aa).

This sequence belongs to the PTH2 family.

It localises to the cytoplasm. It catalyses the reaction an N-acyl-L-alpha-aminoacyl-tRNA + H2O = an N-acyl-L-amino acid + a tRNA + H(+). The natural substrate for this enzyme may be peptidyl-tRNAs which drop off the ribosome during protein synthesis. In Methanothermobacter thermautotrophicus (strain ATCC 29096 / DSM 1053 / JCM 10044 / NBRC 100330 / Delta H) (Methanobacterium thermoautotrophicum), this protein is Peptidyl-tRNA hydrolase.